The chain runs to 923 residues: Protocadherin gamma-B5 (923 aa).

Positions 1-30 (MGSGAGELGRAERLPVLFLFLLSLFCPALC) are cleaved as a signal peptide. Cadherin domains follow at residues 31-133 (EQIR…TPKF), 134-242 (TQNS…PPVF), 243-343 (NRDV…SPEV), 344-448 (TFHS…APVF), 449-558 (HQAS…APRV), and 566-671 (DGSA…LPDI). The Extracellular segment spans residues 31-687 (EQIRYRIPEE…SDPQAELQFY (657 aa)). 2 N-linked (GlcNAc...) asparagine glycosylation sites follow: Asn-415 and Asn-541. A helical membrane pass occupies residues 688–708 (LVVALALISVLFLLAVILAVA). Topologically, residues 709–923 (LRLRRSSSPA…KKKSGKKEKK (215 aa)) are cytoplasmic. Disordered stretches follow at residues 794 to 832 (TSHP…WPNN) and 893 to 923 (ATLT…KEKK). Positions 807–832 (WRFSQAQRPGTSGSQNGDDTGTWPNN) are enriched in polar residues. Over residues 913-923 (NKKKSGKKEKK) the composition is skewed to basic residues.

It localises to the cell membrane. Functionally, potential calcium-dependent cell-adhesion protein. May be involved in the establishment and maintenance of specific neuronal connections in the brain. This chain is Protocadherin gamma-B5 (PCDHGB5), found in Homo sapiens (Human).